A 104-amino-acid polypeptide reads, in one-letter code: Large ribosomal subunit protein uL24 (104 aa).

The protein belongs to the universal ribosomal protein uL24 family. In terms of assembly, part of the 50S ribosomal subunit.

In terms of biological role, one of two assembly initiator proteins, it binds directly to the 5'-end of the 23S rRNA, where it nucleates assembly of the 50S subunit. Its function is as follows. One of the proteins that surrounds the polypeptide exit tunnel on the outside of the subunit. The polypeptide is Large ribosomal subunit protein uL24 (Yersinia pseudotuberculosis serotype O:1b (strain IP 31758)).